A 6907-amino-acid polypeptide reads, in one-letter code: Fibrous sheath-interacting protein 2 (6907 aa).

Residues 273-292 form a disordered region; the sequence is EERIEEQQHRNREESDRKKQ. At Ser430 the chain carries Phosphoserine. Disordered regions lie at residues 439-472, 954-990, 1545-1573, 3202-3257, 5650-5672, 5725-5781, 5850-5880, and 6852-6874; these read SQAF…ESGP, FQKS…RPFP, VQED…TKEM, VSSD…FDQT, RTSS…EHHS, SAQS…KPGI, DKGN…EAPS, and GSAN…KQGS. The segment covering 445–460 has biased composition (basic and acidic residues); it reads PSKEEKETNADWDGRP. The segment covering 954-966 has biased composition (polar residues); the sequence is FQKSRQPRISSPS. Basic and acidic residues-rich tracts occupy residues 1545–1555 and 3213–3229; these read VQEDNKEETKS and SVED…RPDS. A compositionally biased stretch (low complexity) spans 5728-5741; the sequence is SVTTKKVSSSTNKN. Positions 5738 to 5766 form a coiled coil; sequence TNKNISAKEKEEEEREKEKVREEIKSEPS. Basic and acidic residues predominate over residues 5743-5778; that stretch reads SAKEKEEEEREKEKVREEIKSEPSKPDDPQNQRESK.

In terms of assembly, may interact with AKAP4. As to expression, predominantly expressed in testis.

Functionally, plays a role in spermatogenesis. The protein is Fibrous sheath-interacting protein 2 (FSIP2) of Homo sapiens (Human).